Consider the following 35-residue polypeptide: Bacteriocin lactococcin-G subunit beta (35 aa).

In terms of assembly, bacteriocin activity requires interaction of alpha and beta peptides in a molar ratio of 7:1 or 8:1 respectively.

Its function is as follows. Kills Lactococci. The chain is Bacteriocin lactococcin-G subunit beta from Lactococcus lactis subsp. lactis (Streptococcus lactis).